The chain runs to 339 residues: Glyceraldehyde-3-phosphate dehydrogenase (339 aa).

NAD(+) contacts are provided by residues 11-12 (TI) and glycine 110. 139-141 (SCN) is a D-glyceraldehyde 3-phosphate binding site. Catalysis depends on cysteine 140, which acts as the Nucleophile. Arginine 168 is a binding site for NAD(+). 194-195 (HG) lines the D-glyceraldehyde 3-phosphate pocket. Glutamine 301 contacts NAD(+).

Belongs to the glyceraldehyde-3-phosphate dehydrogenase family. As to quaternary structure, homotetramer.

The protein resides in the cytoplasm. It carries out the reaction D-glyceraldehyde 3-phosphate + phosphate + NADP(+) = (2R)-3-phospho-glyceroyl phosphate + NADPH + H(+). The catalysed reaction is D-glyceraldehyde 3-phosphate + phosphate + NAD(+) = (2R)-3-phospho-glyceroyl phosphate + NADH + H(+). The protein operates within carbohydrate degradation; glycolysis; pyruvate from D-glyceraldehyde 3-phosphate: step 1/5. The sequence is that of Glyceraldehyde-3-phosphate dehydrogenase from Methanospirillum hungatei JF-1 (strain ATCC 27890 / DSM 864 / NBRC 100397 / JF-1).